Reading from the N-terminus, the 490-residue chain is Glutamate--tRNA ligase (490 aa).

The short motif at 9–19 (PSPTGLQHIGG) is the 'HIGH' region element. A 'KMSKS' region motif is present at residues 251-255 (KLSKR). K254 contacts ATP.

This sequence belongs to the class-I aminoacyl-tRNA synthetase family. Glutamate--tRNA ligase type 1 subfamily. In terms of assembly, monomer.

The protein localises to the cytoplasm. It catalyses the reaction tRNA(Glu) + L-glutamate + ATP = L-glutamyl-tRNA(Glu) + AMP + diphosphate. Functionally, catalyzes the attachment of glutamate to tRNA(Glu) in a two-step reaction: glutamate is first activated by ATP to form Glu-AMP and then transferred to the acceptor end of tRNA(Glu). The polypeptide is Glutamate--tRNA ligase (Borreliella burgdorferi (strain ATCC 35210 / DSM 4680 / CIP 102532 / B31) (Borrelia burgdorferi)).